A 140-amino-acid chain; its full sequence is Pro-Viral epidermal growth factor (140 aa).

Positions 1-18 are cleaved as a signal peptide; sequence MSMKYLMLLFAAMIIRSF. The Extracellular segment spans residues 19–100; that stretch reads ADSGNAIETT…SENPNTTTSY (82 aa). A glycan (N-linked (GlcNAc...) asparagine; by host) is linked at Asn-34. Residues 41–81 form the EGF-like domain; the sequence is AIRLCGPEGDGYCLHGDCIHARDIDGMYCRCSHGYTGIRCQ. 3 disulfides stabilise this stretch: Cys-45/Cys-58, Cys-53/Cys-69, and Cys-71/Cys-80. N-linked (GlcNAc...) asparagine; by host glycosylation is present at Asn-95. A helical membrane pass occupies residues 101-121; sequence IPSPGIMLVLVGIIIITCCLL. The Cytoplasmic portion of the chain corresponds to 122–140; the sequence is SVYRFTRRTKLPIQDMVVP.

This sequence belongs to the orthopoxvirus OPG019 family. In terms of assembly, viral epidermal growth factor interacts with host EGFR and promotes EGFR dimerization. Cleaved at the cell surface by host ADAM10, thereby releasing the secreted form of VGF.

It is found in the host membrane. The protein localises to the secreted. Stimulates cellular proliferation (hyperplasia)and mobility around infected cells to promote rapid and efficient spread of infection. This effect is beneficial for virus replication in vivo, because poxviruses replicate possibly better in proliferating cells than in quiescent cells. Acts by binding host EGFR, inducing its dimerization, autophosphorylation and leading to activation of several cellular pathways regulating cell proliferation or cell survival. The activation by host EGFR of mitogen activated protein kinases (MAPK) and extracellular-signal regulated kinases (ERK) are essential for the positive effect of vaccinia growth factor on poxvirus virulence in vivo. In Bos taurus (Bovine), this protein is Pro-Viral epidermal growth factor (OPG019).